A 140-amino-acid chain; its full sequence is Nucleoside diphosphate kinase (140 aa).

ATP contacts are provided by Lys-11, Phe-59, Arg-87, Thr-93, Arg-104, and Asn-114. Residue His-117 is the Pros-phosphohistidine intermediate of the active site.

Belongs to the NDK family. In terms of assembly, homotetramer. It depends on Mg(2+) as a cofactor.

It localises to the cytoplasm. It catalyses the reaction a 2'-deoxyribonucleoside 5'-diphosphate + ATP = a 2'-deoxyribonucleoside 5'-triphosphate + ADP. The catalysed reaction is a ribonucleoside 5'-diphosphate + ATP = a ribonucleoside 5'-triphosphate + ADP. In terms of biological role, major role in the synthesis of nucleoside triphosphates other than ATP. The ATP gamma phosphate is transferred to the NDP beta phosphate via a ping-pong mechanism, using a phosphorylated active-site intermediate. This Rhizobium rhizogenes (strain K84 / ATCC BAA-868) (Agrobacterium radiobacter) protein is Nucleoside diphosphate kinase.